Consider the following 203-residue polypeptide: NAD(P)H-quinone oxidoreductase subunit I (203 aa).

4Fe-4S ferredoxin-type domains lie at 55 to 84 and 95 to 124; these read GRIH…VDWE and KHYS…MTEE. Residues Cys-64, Cys-67, Cys-70, Cys-74, Cys-104, Cys-107, Cys-110, and Cys-114 each contribute to the [4Fe-4S] cluster site.

It belongs to the complex I 23 kDa subunit family. NDH-1 is composed of at least 11 different subunits. It depends on [4Fe-4S] cluster as a cofactor.

Its subcellular location is the cellular thylakoid membrane. It catalyses the reaction a plastoquinone + NADH + (n+1) H(+)(in) = a plastoquinol + NAD(+) + n H(+)(out). The catalysed reaction is a plastoquinone + NADPH + (n+1) H(+)(in) = a plastoquinol + NADP(+) + n H(+)(out). NDH-1 shuttles electrons from an unknown electron donor, via FMN and iron-sulfur (Fe-S) centers, to quinones in the respiratory and/or the photosynthetic chain. The immediate electron acceptor for the enzyme in this species is believed to be plastoquinone. Couples the redox reaction to proton translocation, and thus conserves the redox energy in a proton gradient. The protein is NAD(P)H-quinone oxidoreductase subunit I (ndhI) of Picosynechococcus sp. (strain ATCC 27264 / PCC 7002 / PR-6) (Agmenellum quadruplicatum).